We begin with the raw amino-acid sequence, 404 residues long: Exodeoxyribonuclease 7 large subunit (404 aa).

It belongs to the XseA family. As to quaternary structure, heterooligomer composed of large and small subunits.

The protein resides in the cytoplasm. It catalyses the reaction Exonucleolytic cleavage in either 5'- to 3'- or 3'- to 5'-direction to yield nucleoside 5'-phosphates.. In terms of biological role, bidirectionally degrades single-stranded DNA into large acid-insoluble oligonucleotides, which are then degraded further into small acid-soluble oligonucleotides. The sequence is that of Exodeoxyribonuclease 7 large subunit from Tropheryma whipplei (strain TW08/27) (Whipple's bacillus).